The primary structure comprises 209 residues: Uracil phosphoribosyltransferase (209 aa).

Residues Arg-79, Arg-104, and 131–139 contribute to the 5-phospho-alpha-D-ribose 1-diphosphate site; that span reads DPMLATGGS. Uracil is bound by residues Ile-194 and 199–201; that span reads GDA. Residue Asp-200 coordinates 5-phospho-alpha-D-ribose 1-diphosphate.

Belongs to the UPRTase family. Mg(2+) is required as a cofactor.

The catalysed reaction is UMP + diphosphate = 5-phospho-alpha-D-ribose 1-diphosphate + uracil. The protein operates within pyrimidine metabolism; UMP biosynthesis via salvage pathway; UMP from uracil: step 1/1. With respect to regulation, allosterically activated by GTP. In terms of biological role, catalyzes the conversion of uracil and 5-phospho-alpha-D-ribose 1-diphosphate (PRPP) to UMP and diphosphate. The chain is Uracil phosphoribosyltransferase from Citrifermentans bemidjiense (strain ATCC BAA-1014 / DSM 16622 / JCM 12645 / Bem) (Geobacter bemidjiensis).